Consider the following 139-residue polypeptide: MARTKQTARKSTGAKVPRKHIGSKQAHKQTPVSSSSGGVKKVHRFRPGTVALREIRKYQKSTDLLIRKLPFQRLVREIAQEFKTDLRFQSAAIGALQEASEAYLVGLFEDTNLCAIHAKRVTIMPKDIHLARRIRGERS.

Residues 1–43 (MARTKQTARKSTGAKVPRKHIGSKQAHKQTPVSSSSGGVKKVH) form a disordered region. At lysine 5 the chain carries N6,N6,N6-trimethyllysine; by set1; alternate. N6,N6-dimethyllysine; by set1; alternate is present on lysine 5. Lysine 5 and lysine 10 each carry N6-acetyllysine; alternate. Lysine 5 is modified (N6-methyllysine; by set1; alternate). Lysine 10 carries the N6,N6,N6-trimethyllysine; alternate modification. Residue lysine 10 is modified to N6,N6-dimethyllysine; alternate. An N6-methyllysine; alternate modification is found at lysine 10. Serine 11 carries the phosphoserine modification. At lysine 15 the chain carries N6-acetyllysine. Residues 16-27 (VPRKHIGSKQAH) are compositionally biased toward basic residues. 4 positions are modified to N6-acetyllysine; alternate: lysine 19, lysine 24, lysine 28, and lysine 40. 4 positions are modified to N6-methyllysine; alternate: lysine 19, lysine 24, lysine 28, and lysine 40. Lysine 28 and lysine 40 each carry N6,N6,N6-trimethyllysine; alternate. N6,N6-dimethyllysine; alternate is present on residues lysine 28 and lysine 40. At lysine 60 the chain carries N6-acetyllysine. At lysine 83 the chain carries N6,N6,N6-trimethyllysine; alternate. Lysine 83 carries the N6,N6-dimethyllysine; alternate modification. An N6-methyllysine; alternate modification is found at lysine 83.

Belongs to the histone H3 family. The nucleosome is a histone octamer containing two molecules each of H2A, H2B, H3 and H4 assembled in one H3-H4 heterotetramer and two H2A-H2B heterodimers. The octamer wraps approximately 147 bp of DNA. In terms of processing, acetylation is generally linked to gene activation. Different methylation states of H3K4 mark distinct developmental phases. H3K4me2 is associated with euchromatic regions. H3K4me3 is a mark of active chromatin. set1 is responsible for all mono-, di- and tri-methylation of H3K4. H3K4me facilitates subsequent acetylation of H3 and H4. Methylation at H3K9 and H3K27 are linked to gene repression. Post-translationally, H3S10ph, which is linked to gene activation, prevents methylation at H3K9 but facilitates acetylation of H3 and H4.

Its subcellular location is the nucleus. The protein localises to the chromosome. Its function is as follows. Core component of nucleosome. Nucleosomes wrap and compact DNA into chromatin, limiting DNA accessibility to the cellular machineries which require DNA as a template. Histones thereby play a central role in transcription regulation, DNA repair, DNA replication and chromosomal stability. DNA accessibility is regulated via a complex set of post-translational modifications of histones, also called histone code, and nucleosome remodeling. This chain is Histone H3.3 type a (H3a), found in Dictyostelium discoideum (Social amoeba).